The sequence spans 695 residues: Polyribonucleotide nucleotidyltransferase (695 aa).

D488 and D494 together coordinate Mg(2+). Residues 554–613 (PKTTIIKIKTDKIRDLIGRGGETIKGIISTSCASIDVDDSGNVNIFSNNQKSFDTAVQMV) form the KH domain. Positions 623 to 690 (NKVYTGKVVK…DRGRIKLSRK (68 aa)) constitute an S1 motif domain.

The protein belongs to the polyribonucleotide nucleotidyltransferase family. Component of the RNA degradosome, which is a multiprotein complex involved in RNA processing and mRNA degradation. Requires Mg(2+) as cofactor.

It localises to the cytoplasm. It carries out the reaction RNA(n+1) + phosphate = RNA(n) + a ribonucleoside 5'-diphosphate. Its function is as follows. Involved in mRNA degradation. Catalyzes the phosphorolysis of single-stranded polyribonucleotides processively in the 3'- to 5'-direction. This is Polyribonucleotide nucleotidyltransferase from Vesicomyosocius okutanii subsp. Calyptogena okutanii (strain HA).